The chain runs to 548 residues: Peptide chain release factor 3 (548 aa).

Positions 23–290 (ERRRTFGIIS…ALLDWAPPPQ (268 aa)) constitute a tr-type G domain. GTP contacts are provided by residues 32-39 (SHPDAGKT), 100-104 (DTPGH), and 154-157 (NKMD).

Belongs to the TRAFAC class translation factor GTPase superfamily. Classic translation factor GTPase family. PrfC subfamily.

It localises to the cytoplasm. In terms of biological role, increases the formation of ribosomal termination complexes and stimulates activities of RF-1 and RF-2. It binds guanine nucleotides and has strong preference for UGA stop codons. It may interact directly with the ribosome. The stimulation of RF-1 and RF-2 is significantly reduced by GTP and GDP, but not by GMP. The polypeptide is Peptide chain release factor 3 (Aromatoleum aromaticum (strain DSM 19018 / LMG 30748 / EbN1) (Azoarcus sp. (strain EbN1))).